The sequence spans 238 residues: 1-(5-phosphoribosyl)-5-[(5-phosphoribosylamino)methylideneamino] imidazole-4-carboxamide isomerase (238 aa).

The active-site Proton acceptor is the Asp8. Catalysis depends on Asp129, which acts as the Proton donor.

It belongs to the HisA/HisF family.

It localises to the cytoplasm. The enzyme catalyses 1-(5-phospho-beta-D-ribosyl)-5-[(5-phospho-beta-D-ribosylamino)methylideneamino]imidazole-4-carboxamide = 5-[(5-phospho-1-deoxy-D-ribulos-1-ylimino)methylamino]-1-(5-phospho-beta-D-ribosyl)imidazole-4-carboxamide. Its pathway is amino-acid biosynthesis; L-histidine biosynthesis; L-histidine from 5-phospho-alpha-D-ribose 1-diphosphate: step 4/9. This is 1-(5-phosphoribosyl)-5-[(5-phosphoribosylamino)methylideneamino] imidazole-4-carboxamide isomerase from Myxococcus xanthus (strain DK1622).